The primary structure comprises 314 residues: Elongation factor Ts (314 aa).

The segment at 82–85 (TDFV) is involved in Mg(2+) ion dislocation from EF-Tu.

It belongs to the EF-Ts family.

It is found in the cytoplasm. In terms of biological role, associates with the EF-Tu.GDP complex and induces the exchange of GDP to GTP. It remains bound to the aminoacyl-tRNA.EF-Tu.GTP complex up to the GTP hydrolysis stage on the ribosome. This is Elongation factor Ts from Nostoc punctiforme (strain ATCC 29133 / PCC 73102).